The primary structure comprises 190 residues: MNNNLPIGSIAAAVDLLNKENVIAYPTEAVFGVGCDPDSETAVTRLLALKQRPVDKGLILIAASFEQLKPYIDDSILTAAQRKAVFDCWPGPVTFVFPAPATTPRWLTGRFDSLAVRVTNHPLVVALCNAYGKPLVSTSANLSGLPPCRTVEEVRAQFGDDFPVVEGATGGRLNPSEIRDALTGELFRQG.

In terms of domain architecture, YrdC-like spans 7-190 (IGSIAAAVDL…ALTGELFRQG (184 aa)).

Belongs to the SUA5 family. TsaC subfamily.

The protein resides in the cytoplasm. It catalyses the reaction L-threonine + hydrogencarbonate + ATP = L-threonylcarbamoyladenylate + diphosphate + H2O. Functionally, required for the formation of a threonylcarbamoyl group on adenosine at position 37 (t(6)A37) in tRNAs that read codons beginning with adenine. Catalyzes the conversion of L-threonine, HCO(3)(-)/CO(2) and ATP to give threonylcarbamoyl-AMP (TC-AMP) as the acyladenylate intermediate, with the release of diphosphate. This is Threonylcarbamoyl-AMP synthase from Salmonella typhimurium (strain LT2 / SGSC1412 / ATCC 700720).